We begin with the raw amino-acid sequence, 315 residues long: Probable cell division protein WhiA (315 aa).

Residues 275–309 (NLKELGEMVPSGVVSKSGINHRLRKINEIADKIRE) constitute a DNA-binding region (H-T-H motif).

This sequence belongs to the WhiA family.

Functionally, involved in cell division and chromosome segregation. This Brevibacillus brevis (strain 47 / JCM 6285 / NBRC 100599) protein is Probable cell division protein WhiA.